A 555-amino-acid chain; its full sequence is MKTDIEIAQAADIQPITKIAEKIGLSFDDIELYGKYKAKIPLEVLDKFDQQSEGKLVLVTSINPTPAGEGKSTVTVGLADAFARQGKNVMVALREPSLGPVMGIKGGAAGGGFAQVLPMEDINLHFTGDIHAITTANNAISAFLDNSLHQGNPLNIDPRRIIWKRVVDLNDRALRHVTVGLGGPLNGVPREDGFDITVVSEIMAVLCLATSISDLKERLGKIVLAQSYDRKPVTLGDLGVQGAIAMLLKDALKPNLVQTIEGTPALIHGGPFANIAHGCNSVLATKTALKLSDIVITEAGFGADLGGEKFLDIKTRQLGKQPDAVVIVATLRALKMHGGLDKKELTKENVEAVKKGFANLERHIKNMQSYGLPVIVAINEFASDTKSEISALKDLTEALGVPVSLTQVFAKGGEGGLDLAEKLSGMLQEKSDFSYLYDLKEPLSAKIDKVVTEIYGGSKVNYSPKAKRQMREIEENGWNDLPVCMAKTQYSFSDQPNLLAAPEGFEVTVRELLPKIGAGFIVALLGDVMTMPGLPKNPASLKMDVTDDGKISGLF.

65-72 contributes to the ATP binding site; the sequence is TPAGEGKS.

The protein belongs to the formate--tetrahydrofolate ligase family.

The catalysed reaction is (6S)-5,6,7,8-tetrahydrofolate + formate + ATP = (6R)-10-formyltetrahydrofolate + ADP + phosphate. Its pathway is one-carbon metabolism; tetrahydrofolate interconversion. The protein is Formate--tetrahydrofolate ligase of Lactococcus lactis subsp. lactis (strain IL1403) (Streptococcus lactis).